Reading from the N-terminus, the 450-residue chain is Chromosomal replication initiator protein DnaA (450 aa).

Positions 1-79 (MKDSYFDLNT…MEYAYDVAHD (79 aa)) are domain I, interacts with DnaA modulators. Positions 79 to 112 (DFFKPELKVIKVVANPVNNQKSNQSNSDFVATDY) are domain II. The domain III, AAA+ region stretch occupies residues 113–329 (QLNQNFTFDT…GAFNTLTLMA (217 aa)). Positions 157, 159, 160, and 161 each coordinate ATP. The interval 330–450 (RAGRPINVSN…NLSTKIKEKS (121 aa)) is domain IV, binds dsDNA.

The protein belongs to the DnaA family. As to quaternary structure, oligomerizes as a right-handed, spiral filament on DNA at oriC.

It is found in the cytoplasm. Functionally, plays an essential role in the initiation and regulation of chromosomal replication. ATP-DnaA binds to the origin of replication (oriC) to initiate formation of the DNA replication initiation complex once per cell cycle. Binds the DnaA box (a 9 base pair repeat at the origin) and separates the double-stranded (ds)DNA. Forms a right-handed helical filament on oriC DNA; dsDNA binds to the exterior of the filament while single-stranded (ss)DNA is stabiized in the filament's interior. The ATP-DnaA-oriC complex binds and stabilizes one strand of the AT-rich DNA unwinding element (DUE), permitting loading of DNA polymerase. After initiation quickly degrades to an ADP-DnaA complex that is not apt for DNA replication. Binds acidic phospholipids. The polypeptide is Chromosomal replication initiator protein DnaA (Oenococcus oeni (strain ATCC BAA-331 / PSU-1)).